A 371-amino-acid chain; its full sequence is Protein lifeguard 1 (371 aa).

Residues 1 to 145 (MSHEKSFLVS…EGPPSYYDNQ (145 aa)) form a disordered region. The span at 14–49 (YPPPNPGYPGGPQPPMPPYAQPPYPGAPYPQPPFQP) shows a compositional bias: pro residues. Positions 84-98 (YPQEGYPQGPYPQGG) are enriched in low complexity. A compositionally biased stretch (pro residues) spans 102-114 (GPYPQSPFPPNPY). 7 helical membrane-spanning segments follow: residues 165–185 (VFLV…VFTF), 197–217 (VWTY…LSCC), 228–248 (LVAL…IASF), 253–273 (AVIM…IFSM), 283–303 (MGVL…CIFI), 307–327 (ILEI…LAVD), and 346–366 (FAAL…LTII).

It belongs to the BI1 family. LFG subfamily.

Its subcellular location is the membrane. Functionally, potential apoptotic regulator. The protein is Protein lifeguard 1 (GRINA) of Homo sapiens (Human).